The chain runs to 931 residues: Probable zinc protease PqqL (931 aa).

Histidine 80 is a binding site for Zn(2+). The active-site Proton acceptor is glutamate 83. The Zn(2+) site is built by histidine 84 and glutamate 160.

It belongs to the peptidase M16 family. Zn(2+) serves as cofactor.

The protein is Probable zinc protease PqqL (pqqL) of Escherichia coli (strain K12).